The following is a 785-amino-acid chain: Endonuclease MutS2 (785 aa).

334–341 (GPNTGGKT) contributes to the ATP binding site. One can recognise a Smr domain in the interval 710 to 785 (LDLRGKRYEE…GNGATIVHFK (76 aa)).

It belongs to the DNA mismatch repair MutS family. MutS2 subfamily. In terms of assembly, homodimer. Binds to stalled ribosomes, contacting rRNA.

In terms of biological role, endonuclease that is involved in the suppression of homologous recombination and thus may have a key role in the control of bacterial genetic diversity. Functionally, acts as a ribosome collision sensor, splitting the ribosome into its 2 subunits. Detects stalled/collided 70S ribosomes which it binds and splits by an ATP-hydrolysis driven conformational change. Acts upstream of the ribosome quality control system (RQC), a ribosome-associated complex that mediates the extraction of incompletely synthesized nascent chains from stalled ribosomes and their subsequent degradation. Probably generates substrates for RQC. The protein is Endonuclease MutS2 of Pediococcus pentosaceus (strain ATCC 25745 / CCUG 21536 / LMG 10740 / 183-1w).